An 819-amino-acid polypeptide reads, in one-letter code: Protein EFR3 homolog A (819 aa).

Serine 360, serine 363, serine 420, and serine 692 each carry phosphoserine.

It belongs to the EFR3 family. Component of a phosphatidylinositol 4-kinase (PI4K) complex, composed of PI4KA, EFR3 (EFR3A or EFR3B), TTC7 (TTC7A or TTC7B) and HYCC (HYCC1 or HYCC2). Post-translationally, palmitoylated at its N-terminus, anchoring the protein to the plasma membrane. As to expression, widely expressed. Expressed in neurons of the superior olivary complex of the auditory brainstem. Also expressed at lower levels in the cochlear nucleus, the lateral leminiscal nuclei and the inferior collicus.

It localises to the cell membrane. The protein localises to the cytoplasm. It is found in the cytosol. In terms of biological role, component of a complex required to localize phosphatidylinositol 4-kinase (PI4K) to the plasma membrane. The complex acts as a regulator of phosphatidylinositol 4-phosphate (PtdIns(4)P) synthesis. In the complex, EFR3A probably acts as the membrane-anchoring component. Also involved in responsiveness to G-protein-coupled receptors; it is however unclear whether this role is direct or indirect. In Mus musculus (Mouse), this protein is Protein EFR3 homolog A.